The sequence spans 515 residues: 2,3-bisphosphoglycerate-independent phosphoglycerate mutase (515 aa).

Mn(2+)-binding residues include D14 and S64. S64 (phosphoserine intermediate) is an active-site residue. Residues H125, 155–156, R187, R193, 263–266, and K337 each bind substrate; these read RD and RADR. Positions 404, 408, 445, 446, and 464 each coordinate Mn(2+).

This sequence belongs to the BPG-independent phosphoglycerate mutase family. Monomer. It depends on Mn(2+) as a cofactor.

It carries out the reaction (2R)-2-phosphoglycerate = (2R)-3-phosphoglycerate. The protein operates within carbohydrate degradation; glycolysis; pyruvate from D-glyceraldehyde 3-phosphate: step 3/5. Catalyzes the interconversion of 2-phosphoglycerate and 3-phosphoglycerate. This Pseudomonas paraeruginosa (strain DSM 24068 / PA7) (Pseudomonas aeruginosa (strain PA7)) protein is 2,3-bisphosphoglycerate-independent phosphoglycerate mutase.